The chain runs to 819 residues: MDTEGFGELLQQAEQLAAETEGISELPHVERNLQEIQQAGERLRSRTLTRTSQETADVKASVLLGSRGLDISHISQRLESLSAATTFEPLEPVKDTDIQGFLKNEKDNALLSAIEESRKRTFGMAEEYHRESMLVEWEQVKQRILHTLLASGEDALDFTQESEPSYISDAGPPGRSSLDSIEMAYARQIYIYNEKIVNGHLQPNLLDLCASVTELDDKNISDMWAMVKQMTDVLLVPATDALKSRNSVEVRMEFVRQALGYLEQSYKNYTLVTVFGNLHQAQLGGVPGTYQLVRSFLNIKLPAPLPGLQDGEVEGHPVWALIYYCMRCGDLLAASQVVNRAQHQLGEFKTWFQEYMNSKDRRLSPATENKLRLHYRRALRNNTDPYKRAVYCIIGRCDVTDNQSEVADKTEDYLWLKLNQVCFDDDGTSSPQDRLTLSQFQKQLLEDYGESHFTVNQQPFLYFQVLFLTAQFEAAIAFLFRMERLRCHAVHVALVLFELKLLLKSSGQSAQLLSHEPGDPPCMRRLNFVRLLMLYTRKFESTDPREALQYFYFLRDEKDSQGENMFLRCVSELVIESREFDMILGKLENDGSRKPGVIDKFTSDTKPIINKVASVAENKGLFEEAAKLYDLAKNADKVLELMNKLLSPIVPQISAPQSNKERLKNMALSIAERYRAQGISANKFVDSTFYLLLDLITFFDEYHSGHIDRAFDIIDRLKLVPLNQESVEERVAAFRNFSDEIRHNLSEVLLATMNILFTQFKRLKGTSPSSATRPQRVIEDRDSQLRSQARALITFAGMIPYRTSGDTNARLVQMEVLMN.

Residue Thr-49 is modified to Phosphothreonine. Ser-52, Ser-66, Ser-72, Ser-75, Ser-80, Ser-430, and Ser-767 each carry phosphoserine.

Belongs to the nucleoporin interacting component (NIC) family. In terms of assembly, part of the nuclear pore complex (NPC). Component of the p62 complex, a complex composed of NUP62 and NUP54. Forms a complex with NUP35, NUP155, NUP205 and lamin B; the interaction with NUP35 is direct. Does not interact with TPR. Interacts with SMAD4 and IPO7; translocates SMAD4 to the nucleus through the NPC upon BMP7 stimulation resulting in activation of SMAD4 signaling.

Its subcellular location is the nucleus membrane. It localises to the nucleus. It is found in the nuclear pore complex. The protein resides in the nucleus envelope. Plays a role in the nuclear pore complex (NPC) assembly and/or maintenance. May anchor nucleoporins, but not NUP153 and TPR, to the NPC. During renal development, regulates podocyte migration and proliferation through SMAD4 signaling. The chain is Nuclear pore complex protein Nup93 (NUP93) from Bos taurus (Bovine).